The chain runs to 166 residues: Large ribosomal subunit protein uL11 (166 aa).

Belongs to the universal ribosomal protein uL11 family.

In terms of biological role, this protein binds directly to 26S ribosomal RNA. In Prunus armeniaca (Apricot), this protein is Large ribosomal subunit protein uL11 (RPL12).